We begin with the raw amino-acid sequence, 202 residues long: Superoxide dismutase [Mn], mitochondrial (202 aa).

A mitochondrion-targeting transit peptide spans 1 to 5 (HGRGM). H31 is a binding site for Mn(2+). Y39 carries the 3'-nitrotyrosine modification. K49 bears the N6-acetyllysine; alternate mark. K49 carries the post-translational modification N6-succinyllysine; alternate. H79 provides a ligand contact to Mn(2+). An N6-acetyllysine modification is found at K95. 2 positions are modified to N6-acetyllysine; alternate: K103 and K111. N6-succinyllysine; alternate occurs at positions 103 and 111. The Mn(2+) site is built by D164 and H168. K183 is subject to N6-acetyllysine.

This sequence belongs to the iron/manganese superoxide dismutase family. In terms of assembly, homotetramer. Requires Mn(2+) as cofactor. In terms of processing, nitrated under oxidative stress. Nitration coupled with oxidation inhibits the catalytic activity. Post-translationally, acetylation at Lys-122 decreases enzymatic activity. Deacetylated by SIRT3 upon exposure to ionizing radiations or after long fasting. Polyubiquitinated; leading to proteasomal degradation. Deubiquitinated by USP36 which increases protein stability.

The protein localises to the mitochondrion matrix. It catalyses the reaction 2 superoxide + 2 H(+) = H2O2 + O2. Its function is as follows. Destroys superoxide anion radicals which are normally produced within the cells and which are toxic to biological systems. This is Superoxide dismutase [Mn], mitochondrial (SOD2) from Oryctolagus cuniculus (Rabbit).